A 212-amino-acid polypeptide reads, in one-letter code: Thymidylate kinase (212 aa).

ATP is bound at residue 13 to 20 (GLEGAGKS).

Belongs to the thymidylate kinase family.

It carries out the reaction dTMP + ATP = dTDP + ADP. Phosphorylation of dTMP to form dTDP in both de novo and salvage pathways of dTTP synthesis. The protein is Thymidylate kinase of Legionella pneumophila (strain Corby).